Consider the following 288-residue polypeptide: Polyamine aminopropyltransferase (288 aa).

One can recognise a PABS domain in the interval 9-238; that stretch reads ETLHDQFGQY…GIMTFAWATD (230 aa). Gln33 is an S-methyl-5'-thioadenosine binding site. 2 residues coordinate spermidine: His64 and Asp88. S-methyl-5'-thioadenosine contacts are provided by residues Glu108 and 140 to 141; that span reads DG. Residue Asp158 is the Proton acceptor of the active site. Position 158–161 (158–161) interacts with spermidine; the sequence is DCTD. An S-methyl-5'-thioadenosine-binding site is contributed by Pro165.

It belongs to the spermidine/spermine synthase family. Homodimer or homotetramer.

The protein resides in the cytoplasm. The enzyme catalyses S-adenosyl 3-(methylsulfanyl)propylamine + putrescine = S-methyl-5'-thioadenosine + spermidine + H(+). Its pathway is amine and polyamine biosynthesis; spermidine biosynthesis; spermidine from putrescine: step 1/1. Its function is as follows. Catalyzes the irreversible transfer of a propylamine group from the amino donor S-adenosylmethioninamine (decarboxy-AdoMet) to putrescine (1,4-diaminobutane) to yield spermidine. The polypeptide is Polyamine aminopropyltransferase (Escherichia coli (strain ATCC 8739 / DSM 1576 / NBRC 3972 / NCIMB 8545 / WDCM 00012 / Crooks)).